Reading from the N-terminus, the 299-residue chain is Lathosterol oxidase (299 aa).

Helical transmembrane passes span 32–52, 79–99, and 117–137; these read ISLL…CATL, FTVQ…LLEI, and FELV…IYWI. One can recognise a Fatty acid hydroxylase domain in the interval 124-252; that stretch reads ISFLFFTDMF…YFTLWDRIGG (129 aa). The Histidine box-1 signature appears at 138-143; it reads HRGLHH. The Histidine box-2 motif lies at 151 to 155; that stretch reads HKPHH. A helical transmembrane segment spans residues 186–206; it reads IFPLHKVVYLSLYILVNIWTI. The short motif at 228–233 is the Histidine box-3 element; sequence HHTDHH. Serine 253 is modified (phosphoserine). The interval 274-299 is disordered; sequence EGKRSSHSGNGCKNEKLFNGEFTKTE. Residues 286-299 are compositionally biased toward basic and acidic residues; sequence KNEKLFNGEFTKTE.

Belongs to the sterol desaturase family. Fe cation is required as a cofactor.

The protein resides in the endoplasmic reticulum membrane. The enzyme catalyses a Delta(7)-sterol + 2 Fe(II)-[cytochrome b5] + O2 + 2 H(+) = a Delta(5),Delta(7)-sterol + 2 Fe(III)-[cytochrome b5] + 2 H2O. It carries out the reaction lathosterol + 2 Fe(II)-[cytochrome b5] + O2 + 2 H(+) = 7-dehydrocholesterol + 2 Fe(III)-[cytochrome b5] + 2 H2O. The catalysed reaction is 5alpha-cholesta-7,24-dien-3beta-ol + 2 Fe(II)-[cytochrome b5] + O2 + 2 H(+) = 7-dehydrodesmosterol + 2 Fe(III)-[cytochrome b5] + 2 H2O. The protein operates within steroid biosynthesis; cholesterol biosynthesis. Catalyzes the penultimate step of the biosynthesis of cholesterol, the dehydrogenation of lathosterol into 7-dehydrocholesterol (7-DHC). Cholesterol is the major sterol component in mammalian membranes and a precursor for bile acid and steroid hormone synthesis. In addition to its essential role in cholesterol biosynthesis, it also indirectly regulates ferroptosis through the production of 7-DHC. By diverting the spread of damage caused by peroxyl radicals from the phospholipid components to its sterol nucleus, 7-DHC prevents this form of cell death. This Homo sapiens (Human) protein is Lathosterol oxidase.